We begin with the raw amino-acid sequence, 922 residues long: NEDD4-like E3 ubiquitin-protein ligase WWP1 (922 aa).

In terms of domain architecture, C2 spans 1 to 116 (MATASPRSDT…IHNRKLERVK (116 aa)). Polar residues-rich tracts occupy residues 210–219 (GDNTPSSPSQ), 243–278 (NGESSSFAPTDNASVTGTPVVSEENALSPNCTSTTV), 286–302 (ILTSSENNECIPSTSAE), 314–323 (DTSNSRSSSA), and 340–351 (RQQSGNANTETL). Residues 210–388 (GDNTPSSPSQ…RPQPLPPGWE (179 aa)) are disordered. WW domains follow at residues 349 to 382 (ETLPSGWEQRKDPHGRTYYVDHNTRTTTWERPQP), 381 to 414 (QPLPPGWERRVDDRRRVYYVDHNTRTTTWQRPTM), 456 to 489 (GPLPPGWEKRVDSTDRVYFVNHNTKTTQWEDPRT), and 496 to 529 (EPLPEGWEIRYTREGVRYFVDHNTRTTTFKDPRN). Residues 349 to 531 (ETLPSGWEQR…TTFKDPRNGK (183 aa)) form a required for interaction with and ubiquitination of AMOTL2. Required for interaction with YAP1 region. Positions 588-922 (KPYDLRRRLY…IEETEGFGQE (335 aa)) constitute an HECT domain. Cys890 serves as the catalytic Glycyl thioester intermediate.

Interacts with the Crumbs complex components PALS1 and PATJ; interaction with the Crumbs complex is enhanced by WWP1's interaction with AMOTL2 and facilitates WWP1 localization to the plasma membrane. Interaction with the Crumbs complex promotes WWP1 monoubiquitination of AMOTL2, which activates the Hippo signaling pathway. Binds KLF2 and HIVEP3. Binds SCNN1A, SCNN1B, SCNN1G, WBP1, WBP2, DRPLA and adenovirus type 2 PIII. Interacts with RNF11. Interacts with SPART. Interacts with ERBB4 isoforms JM-B CYT-1 and JM-A CYT-1. Interacts with SMAD1, SMAD2, SMAD3, SMAD5, SMAD6, SMAD7, TGFBR1 and TGFBR2. Associates with the TGFBR1:TGFBR2 receptor complex in presence of SMAD7. Interacts with SKIL isoform 1. Interacts with TP63 isoform 1 and isoform 2. Interacts with STAMBP and RNF11. Interacts with NDFIP1 and NDFIP2; this interaction activates the E3 ubiquitin-protein ligase. Interacts with TGIF. Interacts (via WW domains) with ARRDC1, ARRDC2 and ARRDC3. As to quaternary structure, (Microbial infection) Interacts with HTLV-1 protein Gag. In terms of assembly, (Microbial infection) Interacts with ebola virus protein VP40. Auto-ubiquitinated and ubiquitinated by RNF11. In terms of tissue distribution, detected in heart, placenta, pancreas, kidney, liver, skeletal muscle, bone marrow, fetal brain, and at much lower levels in adult brain and lung. Isoform 1 and isoform 5 predominate in all tissues tested, except in testis and bone marrow, where isoform 5 is expressed at much higher levels than isoform 1.

Its subcellular location is the cytoplasm. It is found in the cell membrane. The protein resides in the nucleus. The protein localises to the cell junction. The enzyme catalyses S-ubiquitinyl-[E2 ubiquitin-conjugating enzyme]-L-cysteine + [acceptor protein]-L-lysine = [E2 ubiquitin-conjugating enzyme]-L-cysteine + N(6)-ubiquitinyl-[acceptor protein]-L-lysine.. It participates in protein modification; protein ubiquitination. Its activity is regulated as follows. Activated by NDFIP1- and NDFIP2-binding. In terms of biological role, E3 ubiquitin-protein ligase which accepts ubiquitin from an E2 ubiquitin-conjugating enzyme in the form of a thioester and then directly transfers the ubiquitin to targeted substrates. Ubiquitinates ERBB4 isoforms JM-A CYT-1 and JM-B CYT-1, KLF2, KLF5 and TP63 and promotes their proteasomal degradation. Ubiquitinates RNF11 without targeting it for degradation. Ubiquitinates and promotes degradation of TGFBR1; the ubiquitination is enhanced by SMAD7. Ubiquitinates SMAD6 and SMAD7. Ubiquitinates and promotes degradation of SMAD2 in response to TGF-beta signaling, which requires interaction with TGIF. Activates the Hippo signaling pathway in response to cell contact inhibition and recruitment to the Crumbs complex at the cell membrane. Monoubiquitinates AMOTL2 which facilitates its interaction with and activation of LATS2. LATS2 then phosphorylates YAP1, excluding it from the nucleus and therefore ultimately represses YAP1-driven transcription of target genes. This is NEDD4-like E3 ubiquitin-protein ligase WWP1 (WWP1) from Homo sapiens (Human).